A 57-amino-acid chain; its full sequence is uncharacterized protein (57 aa).

This is an uncharacterized protein from Methanocaldococcus jannaschii (strain ATCC 43067 / DSM 2661 / JAL-1 / JCM 10045 / NBRC 100440) (Methanococcus jannaschii).